The chain runs to 598 residues: Proline--tRNA ligase (598 aa).

It belongs to the class-II aminoacyl-tRNA synthetase family. ProS type 1 subfamily. As to quaternary structure, homodimer.

The protein localises to the cytoplasm. It catalyses the reaction tRNA(Pro) + L-proline + ATP = L-prolyl-tRNA(Pro) + AMP + diphosphate. Catalyzes the attachment of proline to tRNA(Pro) in a two-step reaction: proline is first activated by ATP to form Pro-AMP and then transferred to the acceptor end of tRNA(Pro). As ProRS can inadvertently accommodate and process non-cognate amino acids such as alanine and cysteine, to avoid such errors it has two additional distinct editing activities against alanine. One activity is designated as 'pretransfer' editing and involves the tRNA(Pro)-independent hydrolysis of activated Ala-AMP. The other activity is designated 'posttransfer' editing and involves deacylation of mischarged Ala-tRNA(Pro). The misacylated Cys-tRNA(Pro) is not edited by ProRS. In Synechococcus sp. (strain CC9311), this protein is Proline--tRNA ligase.